The sequence spans 593 residues: Aspartate--tRNA ligase (593 aa).

An L-aspartate-binding site is contributed by Glu-180. Residues 204 to 207 form an aspartate region; that stretch reads QIFK. Arg-226 lines the L-aspartate pocket. Residues 226-228 and Gln-235 each bind ATP; that span reads RDE. His-453 provides a ligand contact to L-aspartate. Glu-487 is an ATP binding site. Arg-494 is an L-aspartate binding site. Residue 539-542 coordinates ATP; it reads GLDR.

The protein belongs to the class-II aminoacyl-tRNA synthetase family. Type 1 subfamily. As to quaternary structure, homodimer.

Its subcellular location is the cytoplasm. The catalysed reaction is tRNA(Asp) + L-aspartate + ATP = L-aspartyl-tRNA(Asp) + AMP + diphosphate. Catalyzes the attachment of L-aspartate to tRNA(Asp) in a two-step reaction: L-aspartate is first activated by ATP to form Asp-AMP and then transferred to the acceptor end of tRNA(Asp). In Clostridium botulinum (strain Kyoto / Type A2), this protein is Aspartate--tRNA ligase.